The following is a 354-amino-acid chain: Guanine nucleotide-binding protein G(i) subunit alpha (354 aa).

The N-myristoyl glycine moiety is linked to residue glycine 2. Cysteine 3 is lipidated: S-palmitoyl cysteine. Residues 32-354 (REVKLLLLGA…KNNLKDCGLF (323 aa)) enclose the G-alpha domain. Positions 35–48 (KLLLLGAGESGKST) are G1 motif. GTP-binding positions include 40–47 (GAGESGKS), 175–181 (LRTRVKT), 200–204 (DVGGQ), 269–272 (NKKD), and alanine 326. The Mg(2+) site is built by serine 47 and threonine 181. Residues 173–181 (DVLRTRVKT) form a G2 motif region. Residues 196–205 (FKMFDVGGQR) are G3 motif. Residues 265–272 (ILFLNKKD) are G4 motif. The G5 motif stretch occupies residues 324–329 (TCATDT).

Belongs to the G-alpha family. G(i/o/t/z) subfamily. As to quaternary structure, g proteins are composed of 3 units; alpha, beta and gamma. The alpha chain contains the guanine nucleotide binding site.

Guanine nucleotide-binding proteins (G proteins) are involved as modulators or transducers in various transmembrane signaling systems. This G protein is involved in 1-methyladenine-induced oocyte maturation. The polypeptide is Guanine nucleotide-binding protein G(i) subunit alpha (Patiria pectinifera (Starfish)).